The primary structure comprises 177 residues: Protein GrpE (177 aa).

The tract at residues 1-26 (MSEEIKKDDLQEEVEATETEETVEEV) is disordered. Acidic residues predominate over residues 10–26 (LQEEVEATETEETVEEV).

Belongs to the GrpE family. Homodimer.

Its subcellular location is the cytoplasm. Its function is as follows. Participates actively in the response to hyperosmotic and heat shock by preventing the aggregation of stress-denatured proteins, in association with DnaK and GrpE. It is the nucleotide exchange factor for DnaK and may function as a thermosensor. Unfolded proteins bind initially to DnaJ; upon interaction with the DnaJ-bound protein, DnaK hydrolyzes its bound ATP, resulting in the formation of a stable complex. GrpE releases ADP from DnaK; ATP binding to DnaK triggers the release of the substrate protein, thus completing the reaction cycle. Several rounds of ATP-dependent interactions between DnaJ, DnaK and GrpE are required for fully efficient folding. The chain is Protein GrpE from Streptococcus agalactiae serotype Ia (strain ATCC 27591 / A909 / CDC SS700).